Reading from the N-terminus, the 252-residue chain is Trans-aconitate 2-methyltransferase (252 aa).

The protein belongs to the methyltransferase superfamily. Tam family.

The protein resides in the cytoplasm. The catalysed reaction is trans-aconitate + S-adenosyl-L-methionine = (E)-3-(methoxycarbonyl)pent-2-enedioate + S-adenosyl-L-homocysteine. Its function is as follows. Catalyzes the S-adenosylmethionine monomethyl esterification of trans-aconitate. This Escherichia coli (strain ATCC 8739 / DSM 1576 / NBRC 3972 / NCIMB 8545 / WDCM 00012 / Crooks) protein is Trans-aconitate 2-methyltransferase.